The sequence spans 140 residues: Large ribosomal subunit protein uL11 (140 aa).

This sequence belongs to the universal ribosomal protein uL11 family. As to quaternary structure, part of the ribosomal stalk of the 50S ribosomal subunit. Interacts with L10 and the large rRNA to form the base of the stalk. L10 forms an elongated spine to which L12 dimers bind in a sequential fashion forming a multimeric L10(L12)X complex. In terms of processing, one or more lysine residues are methylated.

Forms part of the ribosomal stalk which helps the ribosome interact with GTP-bound translation factors. This is Large ribosomal subunit protein uL11 from Brachyspira hyodysenteriae (strain ATCC 49526 / WA1).